A 381-amino-acid polypeptide reads, in one-letter code: DnaJ-related protein spj1 (381 aa).

Positions 5-74 (NFSQKQILGV…RKIYDAYGEE (70 aa)) constitute a J domain. The interval 72-93 (GEEGLNGQPGGPGGGPGEGFPG) is disordered. A compositionally biased stretch (gly residues) spans 78–93 (GQPGGPGGGPGEGFPG). Residues 138-225 (GGSFTLEIPV…CKGERVAEVV (88 aa)) form a CR-type zinc finger. 4 CXXCXGXG motif repeats span residues 151–158 (CSVCSGQG), 172–179 (CPVCGGSG), 199–206 (CNACNGNG), and 213–220 (CPRCKGER). A Prevents secretion from ER motif is present at residues 378–381 (FDEL).

It is found in the endoplasmic reticulum. The sequence is that of DnaJ-related protein spj1 (spj1) from Schizosaccharomyces pombe (strain 972 / ATCC 24843) (Fission yeast).